A 573-amino-acid chain; its full sequence is Probable D-xylulose kinase A (573 aa).

Positions 100, 171, 287, and 288 each coordinate substrate. ATP-binding positions include tryptophan 368, 473–474, and asparagine 477; that span reads GG.

It belongs to the FGGY kinase family.

It localises to the cytoplasm. It catalyses the reaction D-xylulose + ATP = D-xylulose 5-phosphate + ADP + H(+). Its function is as follows. Highly specific D-xylulose kinase which participates in the catabolism of xylose. Xylose is a major component of hemicelluloses such as xylan. Most fungi utilize D-xylose via three enzymatic reactions, xylose reductase (XR), xylitol dehydrogenase (XDH), and xylulokinase, to form xylulose 5-phosphate, which enters pentose phosphate pathway. This chain is Probable D-xylulose kinase A (xkiA), found in Aspergillus terreus (strain NIH 2624 / FGSC A1156).